A 461-amino-acid polypeptide reads, in one-letter code: Cytochrome c biogenesis protein CcsB (461 aa).

The next 3 helical transmembrane spans lie at 32–52 (LRLAIALLLIIALFSISGTVI), 91–111 (TWWFLSLLVLFGTSLTACTFT), and 178–198 (IGPIIVHIGIVTILLGSIWGA).

The protein belongs to the Ccs1/CcsB family. As to quaternary structure, may interact with CcsA.

It localises to the cellular thylakoid membrane. Its function is as follows. Required during biogenesis of c-type cytochromes (cytochrome c6 and cytochrome f) at the step of heme attachment. This Trichormus variabilis (strain ATCC 29413 / PCC 7937) (Anabaena variabilis) protein is Cytochrome c biogenesis protein CcsB.